Here is a 35-residue protein sequence, read N- to C-terminus: Mu-thomitoxin-Hme1c (35 aa).

3 disulfides stabilise this stretch: cysteine 2–cysteine 18, cysteine 9–cysteine 23, and cysteine 17–cysteine 34.

It belongs to the neurotoxin 07 (Beta/delta-agtx) family. As to expression, expressed by the venom gland.

The protein localises to the secreted. Its function is as follows. Gating-modifier toxin that inhibits mammalian and insect voltage-gated sodium channels. It shifts the voltage dependence of channel activation to more positive voltages. It shows potent activity on Nav1.4/SCN4A (IC(50)=103 nM), Nav1.5/SCN5A (IC(50)=268 nM) and Para/DmNav1 (IC(50)=555 nM) and lower activities on Nav1.2/SCN2A (IC(50)=1447 nM) and Nav1.6/SCN8A (IC(50)=3504 nM). In addition, at a concentration of 1 uM, the toxin inhibits 90-100% of sodium current through Nav1.2/SCN2A, Nav1.4/SCN4A, Nav1.5/SCN5A, Nav1.6/SCN8A and Para/DmNav1 channels, when the voltage of maximal activation of the channel in control conditions is applied. It binds to the S3-S4 helix-loop-helix motif in the voltage-sensing domain of repeat 1 (shown on hNav1.4/SCN4A). The toxin is amphiphilic and binds to both neutral and negatively charged lipid vesicles with high affinity. The hydrophobic face lies on the opposite side to the hydrophobic faces of classical gating modifiers. The protein is Mu-thomitoxin-Hme1c of Heriaeus mellotteei (Crab spider).